Here is a 157-residue protein sequence, read N- to C-terminus: Crossover junction endodeoxyribonuclease RuvC (157 aa).

Residues D7, E67, and D140 contribute to the active site. Mg(2+) is bound by residues D7, E67, and D140.

It belongs to the RuvC family. Homodimer which binds Holliday junction (HJ) DNA. The HJ becomes 2-fold symmetrical on binding to RuvC with unstacked arms; it has a different conformation from HJ DNA in complex with RuvA. In the full resolvosome a probable DNA-RuvA(4)-RuvB(12)-RuvC(2) complex forms which resolves the HJ. The cofactor is Mg(2+).

The protein resides in the cytoplasm. The enzyme catalyses Endonucleolytic cleavage at a junction such as a reciprocal single-stranded crossover between two homologous DNA duplexes (Holliday junction).. In terms of biological role, the RuvA-RuvB-RuvC complex processes Holliday junction (HJ) DNA during genetic recombination and DNA repair. Endonuclease that resolves HJ intermediates. Cleaves cruciform DNA by making single-stranded nicks across the HJ at symmetrical positions within the homologous arms, yielding a 5'-phosphate and a 3'-hydroxyl group; requires a central core of homology in the junction. The consensus cleavage sequence is 5'-(A/T)TT(C/G)-3'. Cleavage occurs on the 3'-side of the TT dinucleotide at the point of strand exchange. HJ branch migration catalyzed by RuvA-RuvB allows RuvC to scan DNA until it finds its consensus sequence, where it cleaves and resolves the cruciform DNA. The chain is Crossover junction endodeoxyribonuclease RuvC from Rickettsia typhi (strain ATCC VR-144 / Wilmington).